The sequence spans 120 residues: Large ribosomal subunit protein uL18 (120 aa).

Belongs to the universal ribosomal protein uL18 family. Part of the 50S ribosomal subunit; part of the 5S rRNA/L5/L18/L25 subcomplex. Contacts the 5S and 23S rRNAs.

This is one of the proteins that bind and probably mediate the attachment of the 5S RNA into the large ribosomal subunit, where it forms part of the central protuberance. This is Large ribosomal subunit protein uL18 from Synechococcus elongatus (strain ATCC 33912 / PCC 7942 / FACHB-805) (Anacystis nidulans R2).